A 176-amino-acid chain; its full sequence is Nudix hydrolase 18, mitochondrial (176 aa).

A mitochondrion-targeting transit peptide spans 1-21 (MVCLVSRTGRQSQRYNKGRRQ). One can recognise a Nudix hydrolase domain in the interval 22 to 153 (VVGCIPYRLK…WMKEALDVLV (132 aa)). Residues 60 to 81 (GGWELDESVEEAASRESLEEAG) carry the Nudix box motif. Residues Glu-75 and Glu-79 each contribute to the Mg(2+) site.

It belongs to the Nudix hydrolase family. It depends on Mg(2+) as a cofactor. Mn(2+) serves as cofactor. As to expression, expressed in roots, stems and inflorescences.

It localises to the mitochondrion. In terms of biological role, probably mediates the hydrolysis of some nucleoside diphosphate derivatives. In Arabidopsis thaliana (Mouse-ear cress), this protein is Nudix hydrolase 18, mitochondrial (NUDT18).